A 615-amino-acid polypeptide reads, in one-letter code: Matrix metalloproteinase-25 (615 aa).

Positions 1-162 (MCFPGSQISP…AAGLVRRRRR (162 aa)) are excised as a propeptide. The helical transmembrane segment at 53–73 (ILRLPAFGLPLLALLLVPLLP) threads the bilayer. The Cysteine switch motif lies at 143–150 (PRCSLPDV). 2 residues coordinate Zn(2+): Cys145 and His287. Residue Glu288 is part of the active site. Zn(2+)-binding residues include His291 and His297. Positions 336–366 (VSQNPNARPTRKPLVPPPQPPAMPPDSPATP) are disordered. Over residues 349 to 366 (LVPPPQPPAMPPDSPATP) the composition is skewed to pro residues. Hemopexin repeat units follow at residues 368–417 (PDRC…WEGL), 421–466 (VKVI…GLPP), 467–515 (GEDV…DGAP), and 516–562 (FAPD…WLDC). An intrachain disulfide couples Cys371 to Cys562. A disordered region spans residues 547–582 (AESDSPQPIGPKWLDCPAPNSDPRVTSPPKTTSKTR). Ala593 carries GPI-anchor amidated alanine lipidation. The propeptide at 594–615 (SEQLSPLLLPLLPLVAGEVFSY) is removed in mature form.

The protein belongs to the peptidase M10A family. Requires Zn(2+) as cofactor. It depends on Ca(2+) as a cofactor. Post-translationally, the precursor is cleaved by a furin endopeptidase.

The protein localises to the cell membrane. Its function is as follows. May activate progelatinase A. The protein is Matrix metalloproteinase-25 (Mmp25) of Mus musculus (Mouse).